A 758-amino-acid polypeptide reads, in one-letter code: CRISPR system single-strand-specific deoxyribonuclease Cas10/Csm1 (subtype III-A) (758 aa).

The tract at residues 1 to 82 is HD domain; sequence MKKEKIDLFY…TYIADNIASG (82 aa). In terms of domain architecture, GGDEF spans 509–647; that stretch reads KRLAVVRLDV…EKDSISLFSS (139 aa).

Belongs to the CRISPR-associated Cas10/Csm1 family. In terms of assembly, part of the Csm effector complex that includes at least Cas10(1), Csm2(3), Csm3(5), Csm4(1), Csm5(1) and mature crRNA. The Csm complex is elongated and slightly twisted with a maximal length of 215 Angstroms and a diameter of 75-80 Angstroms. It has been modeled to have a central protein filamant of Csm3 subunits along which the dsRNA helix of paired crRNA and target RNA binds. The filament is capped at one end by Cas10 and Csm4 and at the other end by Csm5; ssDNA is thought to bind to the N-terminal HD domain of Cas10. Csm with a precursor crRNA does not include Csm5, while Cas6, the enzyme probably involved in pre-crRNA processing, is found associated with a subset of the Csm complex. The cofactor is a divalent metal cation.

It carries out the reaction 6 ATP = cyclic hexaadenylate + 6 diphosphate. SsDNase activity is activated by target RNA binding to the Csm-crRNA complex and is inhibited by EDTA. In terms of biological role, CRISPR (clustered regularly interspaced short palindromic repeat) is an adaptive immune system that provides protection against mobile genetic elements (viruses, transposable elements and conjugative plasmids). CRISPR clusters contain spacers, sequences complementary to antecedent mobile elements, and target invading nucleic acids. CRISPR clusters are transcribed and processed into CRISPR RNA (crRNA). The type III-A Csm effector complex binds crRNA and acts as a crRNA-guided RNase, DNase and cyclic oligoadenylate synthase; binding of target RNA cognate to the crRNA is required for all activities. In a heterologous host this Csm effector complex restricts ssRNA phage MS2, suggesting it may target RNA viruses in vivo. Functionally, csm functions as a non-specific ssDNase. Base-pairing between crRNA and target RNA to form a ternary Csm complex activates a ssDNase activity; target RNA cleavage suppresses the ssDNase, a temporal control that prevents uncontrolled DNA degradation. Viral RNA transcripts probably tether the Csm complex to the viral genome, recruiting Cas10 ssDNA activity which is able to degrade DNA in the transcription bubble, spatially controlling the DNase activity. Its function is as follows. This subunit has a weak ssDNase activity that is dramatically activated by the ternary Csm effector complex (the crRNA, Cas proteins and a cognate target ssRNA). Target RNA and ssDNA are cleaved simultaneously, although RNase activity (of Csm3) is much faster. RNA cleavage by Csm3 is not required for ssDNase activity as Csm complex with inactive Csm3 still has ssDNase activity; however as the cleaved target RNA products dissociate away ssDNase activity decreases. Self-recognition, with subsequent repression of the ssDNase activity, occurs when the 5' handle of the crRNA bases pairs with the 3' flanking sequence of the target RNA (which would occur if the CRISPR locus were transcribed as an anti-pre-crRNA). This protein has low activity on dsDNA which is not stimulated by the Csm complex. This subunit is a single-strand-specific deoxyribonuclease (ssDNase) which digests both linear and circular ssDNA; it has both exo- and endonuclease activity. In terms of biological role, when associated with the ternary Csm effector complex (the crRNA, Cas proteins and a cognate target ssRNA) synthesizes cyclic oligoadenylates (cOA) from ATP, producing cyclic triadenylate (cA3) up to cyclic hexaadenylate (cA6), which is the active cOA. The enzyme is also able to cyclize pppA3 up to pppA6. cOAs are second messengers that induce an antiviral state important for defense against invading nucleic acids. Synthesis of cOA can occur with AMP plus ATP, 2'dATP or 3'dATP (but no other nucleotides), and requires a free 3'-OH ribose moiety. This Streptococcus thermophilus protein is CRISPR system single-strand-specific deoxyribonuclease Cas10/Csm1 (subtype III-A).